The following is a 429-amino-acid chain: Ribosomal RNA small subunit methyltransferase B (429 aa).

S-adenosyl-L-methionine-binding positions include 254–260, Asp277, Asp303, and Asp322; that span reads CAAPGGK. Residue Cys375 is the Nucleophile of the active site.

This sequence belongs to the class I-like SAM-binding methyltransferase superfamily. RsmB/NOP family.

It localises to the cytoplasm. It catalyses the reaction cytidine(967) in 16S rRNA + S-adenosyl-L-methionine = 5-methylcytidine(967) in 16S rRNA + S-adenosyl-L-homocysteine + H(+). Specifically methylates the cytosine at position 967 (m5C967) of 16S rRNA. The protein is Ribosomal RNA small subunit methyltransferase B of Yersinia enterocolitica serotype O:8 / biotype 1B (strain NCTC 13174 / 8081).